We begin with the raw amino-acid sequence, 635 residues long: Threonine--tRNA ligase (635 aa).

One can recognise a TGS domain in the interval 1–61 (MITVRLPDGS…EKDSDLAIIT (61 aa)). Residues 242 to 533 (DHRKLGKQLD…LIEHYAGALP (292 aa)) are catalytic. 3 residues coordinate Zn(2+): C333, H384, and H510.

This sequence belongs to the class-II aminoacyl-tRNA synthetase family. In terms of assembly, homodimer. Requires Zn(2+) as cofactor.

Its subcellular location is the cytoplasm. The catalysed reaction is tRNA(Thr) + L-threonine + ATP = L-threonyl-tRNA(Thr) + AMP + diphosphate + H(+). Catalyzes the attachment of threonine to tRNA(Thr) in a two-step reaction: L-threonine is first activated by ATP to form Thr-AMP and then transferred to the acceptor end of tRNA(Thr). Also edits incorrectly charged L-seryl-tRNA(Thr). This is Threonine--tRNA ligase from Janthinobacterium sp. (strain Marseille) (Minibacterium massiliensis).